We begin with the raw amino-acid sequence, 247 residues long: ATP synthase subunit a, chloroplastic (247 aa).

Helical transmembrane passes span 38-58 (QVLI…TIAV), 95-115 (VPFI…GALL), 134-154 (INTT…AGLT), 199-219 (LVVV…VMLL), and 220-240 (GLFT…AYIG).

This sequence belongs to the ATPase A chain family. As to quaternary structure, F-type ATPases have 2 components, CF(1) - the catalytic core - and CF(0) - the membrane proton channel. CF(1) has five subunits: alpha(3), beta(3), gamma(1), delta(1), epsilon(1). CF(0) has four main subunits: a, b, b' and c.

The protein localises to the plastid. The protein resides in the chloroplast thylakoid membrane. Key component of the proton channel; it plays a direct role in the translocation of protons across the membrane. The chain is ATP synthase subunit a, chloroplastic from Solanum lycopersicum (Tomato).